The primary structure comprises 102 residues: DET1- and DDB1-associated protein 1 (102 aa).

Position 2 is an N-acetylalanine (A2). Residues S33 and S95 each carry the phosphoserine modification. Residues 67–102 (NAAKKRDQEQVEAEGESSAPPRKVARTDSPDMPEDT) are disordered.

This sequence belongs to the DDA1 family. In terms of assembly, component of numerous DCX (DDB1-CUL4-X-box) E3 ubiquitin-protein ligase complexes which consist of a core of DDB1, cullin-4 (CUL4A or CUL4B), DDA1 and RBX1. Component of the DCX(DCAF15) complex, also named CLR4(DCAF15) complex, composed of DCAF15, DDB1, cullin-4 (CUL4A or CUL4B), DDA1 and RBX1. Part of the DDD core complex containing DET1, DDA1 and DDB1; the DDD core complex recruits a specific UBE2E enzyme, such as UBE2E1, UBE2E2 UBE2E3, to form specific DDD-E2 complexes.

It functions in the pathway protein modification; protein ubiquitination. Functionally, functions as a component of numerous distinct DCX (DDB1-CUL4-X-box) E3 ubiquitin-protein ligase complexes which mediate the ubiquitination and subsequent proteasomal degradation of target proteins. In the DCX complexes, acts as a scaffolding subunit required to stabilize the complex. The chain is DET1- and DDB1-associated protein 1 from Mus musculus (Mouse).